Consider the following 1622-residue polypeptide: ABC transporter C family member 1 (1622 aa).

A run of 9 helical transmembrane segments spans residues 37-57, 73-93, 110-130, 145-165, 174-194, 336-356, 440-460, 527-547, and 557-577; these read FVLGISHLVLLILCLYRLWLI, FSYFLALLAAYATAEPLFRLV, EAFMLVLEAFAWGSALVMTVV, FAVIYALVGDMVLLNLVLSVK, YLYISEVAVQVAFGTLLFVYF, AWIGYIYAISIFVGVVLGVLC, VASIIGALFLVLMFPIQTVII, FILNSIPVLVTVVSFGVFSLL, and FTSLSLFSVLRFPLFMLPNII. Residues 302–582 enclose the ABC transmembrane type-1 1 domain; it reads FWWGGFWKIG…LPNIITQMVN (281 aa). Positions 614 to 838 constitute an ABC transporter 1 domain; sequence ISIRNGYFSW…GPLFQRLMEN (225 aa). Position 649 to 656 (649 to 656) interacts with ATP; that stretch reads GSTGEGKT. The tract at residues 852–876 is disordered; sequence AEVDQTSVKPVENGNANNLQKDGIE. Residues 855–871 are compositionally biased toward polar residues; the sequence is DQTSVKPVENGNANNLQ. The next 6 helical transmembrane spans lie at 909–929, 951–971, 1027–1049, 1053–1072, 1138–1158, and 1172–1192; these read ALGGAWVVMMLVICYVLTQVF, PLFYNIVYALLSFGQVSVTLI, AVFVNMFMGSIAQLLSTVILIGI, LSLWAIMPLLVVFYGAYLYY, LGIRLEVLGGLMVWLTASLAV, and STMGLLLSYALSITSSLTAVL. One can recognise an ABC transmembrane type-1 2 domain in the interval 916-1200; the sequence is VMMLVICYVL…VLRLASLAEN (285 aa). Residues 1231 to 1246 are interaction with calmodulin and FKP42/TWD1; it reads WPSSGSIKFEDVVLRY. The region spanning 1237–1471 is the ABC transporter 2 domain; the sequence is IKFEDVVLRY…GESSFSKMVQ (235 aa). 1271 to 1278 provides a ligand contact to ATP; that stretch reads GRTGAGKS.

This sequence belongs to the ABC transporter superfamily. ABCC family. Conjugate transporter (TC 3.A.1.208) subfamily. As to quaternary structure, interacts with calmodulin (CaM), PAS1 and FKBP42/TWD1. In terms of tissue distribution, ubiquitous, with higher levels in leaves and stems and lower levels in roots. Localized in the root apex, root hair tips and root epidermis.

The protein resides in the vacuole membrane. It catalyses the reaction ATP + H2O + xenobioticSide 1 = ADP + phosphate + xenobioticSide 2.. Pump for glutathione S-conjugates. Mediates the transport of S-(2,4-dinitrophenyl)-glutathione (DNP-GS), GSSG, cyanidin 3-glucoside-GS (C3G-GS) and metolachlor-GS (MOC-GS). This Arabidopsis thaliana (Mouse-ear cress) protein is ABC transporter C family member 1 (ABCC1).